The sequence spans 251 residues: Malonyl-[acyl-carrier protein] O-methyltransferase (251 aa).

Belongs to the methyltransferase superfamily.

It carries out the reaction malonyl-[ACP] + S-adenosyl-L-methionine = malonyl-[ACP] methyl ester + S-adenosyl-L-homocysteine. Its pathway is cofactor biosynthesis; biotin biosynthesis. Converts the free carboxyl group of a malonyl-thioester to its methyl ester by transfer of a methyl group from S-adenosyl-L-methionine (SAM). It allows to synthesize pimeloyl-ACP via the fatty acid synthetic pathway. The polypeptide is Malonyl-[acyl-carrier protein] O-methyltransferase (Erwinia billingiae (strain Eb661)).